Consider the following 513-residue polypeptide: Ribonuclease Y (513 aa).

A helical membrane pass occupies residues 6-26 (YIIIAVVIIIICVILGLYVVD). Residues 203–288 (TVHVVNLPND…EMVEKAKKEV (86 aa)) enclose the KH domain. The HD domain maps to 329-422 (VLKHSIEVSH…VQAADAISAA (94 aa)).

Belongs to the RNase Y family.

The protein localises to the cell membrane. Functionally, endoribonuclease that initiates mRNA decay. The protein is Ribonuclease Y of Clostridium botulinum (strain Loch Maree / Type A3).